Reading from the N-terminus, the 216-residue chain is ATP-dependent Clp protease proteolytic subunit (216 aa).

Serine 101 functions as the Nucleophile in the catalytic mechanism. Residue histidine 126 is part of the active site.

It belongs to the peptidase S14 family. In terms of assembly, component of the chloroplastic Clp protease core complex.

It is found in the plastid. The protein resides in the chloroplast stroma. The enzyme catalyses Hydrolysis of proteins to small peptides in the presence of ATP and magnesium. alpha-casein is the usual test substrate. In the absence of ATP, only oligopeptides shorter than five residues are hydrolyzed (such as succinyl-Leu-Tyr-|-NHMec, and Leu-Tyr-Leu-|-Tyr-Trp, in which cleavage of the -Tyr-|-Leu- and -Tyr-|-Trp bonds also occurs).. In terms of biological role, cleaves peptides in various proteins in a process that requires ATP hydrolysis. Has a chymotrypsin-like activity. Plays a major role in the degradation of misfolded proteins. The protein is ATP-dependent Clp protease proteolytic subunit of Saccharum hybrid (Sugarcane).